Reading from the N-terminus, the 346-residue chain is Phenylalanine--tRNA ligase alpha subunit (346 aa).

Glu-261 contributes to the Mg(2+) binding site.

The protein belongs to the class-II aminoacyl-tRNA synthetase family. Phe-tRNA synthetase alpha subunit type 1 subfamily. Tetramer of two alpha and two beta subunits. Mg(2+) serves as cofactor.

It localises to the cytoplasm. It catalyses the reaction tRNA(Phe) + L-phenylalanine + ATP = L-phenylalanyl-tRNA(Phe) + AMP + diphosphate + H(+). The protein is Phenylalanine--tRNA ligase alpha subunit of Dehalococcoides mccartyi (strain ATCC BAA-2100 / JCM 16839 / KCTC 5957 / BAV1).